A 157-amino-acid chain; its full sequence is MASNKVVISALLVVVVSVLAATTTMADHHQEQVVYTPGQLCQPGIGYPTYPLPRCRAFVKRQCVAPGTVDEQVRRGCCRQLAAIDSSWCRCDALNHMLRIIYRESGAADAGHPMAEVFRGCRRGDIERAAASLPAFCNVDIPNGVGGVCYWLPGTGY.

The first 26 residues, 1 to 26, serve as a signal peptide directing secretion; it reads MASNKVVISALLVVVVSVLAATTTMA. Disulfide bonds link Cys41–Cys89, Cys55–Cys77, Cys63–Cys121, Cys78–Cys137, and Cys91–Cys149.

Belongs to the cereal trypsin/alpha-amylase inhibitor family. Five disulfide bonds are present.

Its subcellular location is the secreted. Its function is as follows. Seed storage protein. The protein is Alpha-amylase/trypsin inhibitor RA16 of Oryza sativa subsp. japonica (Rice).